The chain runs to 570 residues: Sulfite reductase [NADPH] hemoprotein beta-component (570 aa).

4 residues coordinate [4Fe-4S] cluster: Cys433, Cys439, Cys478, and Cys482. Cys482 provides a ligand contact to siroheme.

The protein belongs to the nitrite and sulfite reductase 4Fe-4S domain family. In terms of assembly, alpha(8)-beta(8). The alpha component is a flavoprotein, the beta component is a hemoprotein. The cofactor is siroheme. [4Fe-4S] cluster serves as cofactor.

It catalyses the reaction hydrogen sulfide + 3 NADP(+) + 3 H2O = sulfite + 3 NADPH + 4 H(+). Its pathway is sulfur metabolism; hydrogen sulfide biosynthesis; hydrogen sulfide from sulfite (NADPH route): step 1/1. In terms of biological role, component of the sulfite reductase complex that catalyzes the 6-electron reduction of sulfite to sulfide. This is one of several activities required for the biosynthesis of L-cysteine from sulfate. The protein is Sulfite reductase [NADPH] hemoprotein beta-component of Aeromonas hydrophila subsp. hydrophila (strain ATCC 7966 / DSM 30187 / BCRC 13018 / CCUG 14551 / JCM 1027 / KCTC 2358 / NCIMB 9240 / NCTC 8049).